Consider the following 92-residue polypeptide: Large ribosomal subunit protein bL31 (92 aa).

It belongs to the bacterial ribosomal protein bL31 family. Type A subfamily. Part of the 50S ribosomal subunit.

Binds the 23S rRNA. This is Large ribosomal subunit protein bL31 from Mesoplasma florum (strain ATCC 33453 / NBRC 100688 / NCTC 11704 / L1) (Acholeplasma florum).